An 83-amino-acid chain; its full sequence is DNA-directed RNA polymerase subunit Rpo5 (83 aa).

The protein belongs to the archaeal Rpo5/eukaryotic RPB5 RNA polymerase subunit family. As to quaternary structure, part of the RNA polymerase complex.

Its subcellular location is the cytoplasm. The enzyme catalyses RNA(n) + a ribonucleoside 5'-triphosphate = RNA(n+1) + diphosphate. DNA-dependent RNA polymerase (RNAP) catalyzes the transcription of DNA into RNA using the four ribonucleoside triphosphates as substrates. This chain is DNA-directed RNA polymerase subunit Rpo5, found in Metallosphaera sedula (strain ATCC 51363 / DSM 5348 / JCM 9185 / NBRC 15509 / TH2).